A 102-amino-acid polypeptide reads, in one-letter code: Small ribosomal subunit protein uS10 (102 aa).

The protein belongs to the universal ribosomal protein uS10 family. In terms of assembly, part of the 30S ribosomal subunit.

In terms of biological role, involved in the binding of tRNA to the ribosomes. The chain is Small ribosomal subunit protein uS10 from Pyrococcus abyssi (strain GE5 / Orsay).